The following is a 356-amino-acid chain: Glycerol-1-phosphate dehydrogenase [NAD(P)+] (356 aa).

NAD(+) is bound by residues 103–107 and 125–128; these read GRSID and TAAS. Asp130 lines the substrate pocket. Ser134 contributes to the NAD(+) binding site. Asp177 contacts substrate. Positions 177 and 257 each coordinate Zn(2+). Residue His261 participates in substrate binding. His273 contributes to the Zn(2+) binding site.

Belongs to the glycerol-1-phosphate dehydrogenase family. The cofactor is Zn(2+).

It localises to the cytoplasm. It catalyses the reaction sn-glycerol 1-phosphate + NAD(+) = dihydroxyacetone phosphate + NADH + H(+). The catalysed reaction is sn-glycerol 1-phosphate + NADP(+) = dihydroxyacetone phosphate + NADPH + H(+). Its pathway is membrane lipid metabolism; glycerophospholipid metabolism. Functionally, catalyzes the NAD(P)H-dependent reduction of dihydroxyacetonephosphate (DHAP or glycerone phosphate) to glycerol 1-phosphate (G1P). The G1P thus generated is used as the glycerophosphate backbone of phospholipids in the cellular membranes of Archaea. This chain is Glycerol-1-phosphate dehydrogenase [NAD(P)+], found in Methanosarcina acetivorans (strain ATCC 35395 / DSM 2834 / JCM 12185 / C2A).